The following is a 436-amino-acid chain: Histidinol dehydrogenase (436 aa).

Residues tyrosine 130, glutamine 191, and asparagine 214 each coordinate NAD(+). Substrate is bound by residues serine 237, glutamine 259, and histidine 262. Residues glutamine 259 and histidine 262 each coordinate Zn(2+). Catalysis depends on proton acceptor residues glutamate 327 and histidine 328. The substrate site is built by histidine 328, aspartate 361, glutamate 415, and histidine 420. A Zn(2+)-binding site is contributed by aspartate 361. Zn(2+) is bound at residue histidine 420.

Belongs to the histidinol dehydrogenase family. Zn(2+) serves as cofactor.

It carries out the reaction L-histidinol + 2 NAD(+) + H2O = L-histidine + 2 NADH + 3 H(+). It functions in the pathway amino-acid biosynthesis; L-histidine biosynthesis; L-histidine from 5-phospho-alpha-D-ribose 1-diphosphate: step 9/9. Its function is as follows. Catalyzes the sequential NAD-dependent oxidations of L-histidinol to L-histidinaldehyde and then to L-histidine. This is Histidinol dehydrogenase from Geobacter metallireducens (strain ATCC 53774 / DSM 7210 / GS-15).